The primary structure comprises 511 residues: Mesoderm induction early response protein 1 (511 aa).

Residues 1–16 (MAEPSVESSSPGGSAT) show a composition bias toward low complexity. The segment at 1–171 (MAEPSVESSS…EEESEEDEDY (171 aa)) is disordered. Residue Ser-10 is modified to Phosphoserine. Over residues 17 to 36 (SEDHEFDPSADMLVHDFDDE) the composition is skewed to basic and acidic residues. The segment covering 37 to 46 (RTLEEEEMME) has biased composition (acidic residues). The segment covering 57 to 66 (DLAREGDMPI) has biased composition (basic and acidic residues). A compositionally biased stretch (acidic residues) spans 83–104 (EEEEEEEEEEEGEDDEDADNDD). The segment covering 128 to 143 (QSSNDDPSQSVTSQDA) has biased composition (polar residues). Position 140 is a phosphoserine (Ser-140). At Tyr-154 the chain carries Phosphotyrosine. Ser-159 and Ser-165 each carry phosphoserine. Residues 159–171 (SEIEEESEEDEDY) are compositionally biased toward acidic residues. The ELM2 domain occupies 179-277 (KEIMVGSMFQ…EALRRLRFNV (99 aa)). Residue Lys-238 forms a Glycyl lysine isopeptide (Lys-Gly) (interchain with G-Cter in SUMO2) linkage. The SANT domain occupies 282–334 (EELSVWTEEECRNFEQGLKAYGKDFHLIQANKVRTRSVGECVAFYYMWKKSER). The segment at 365–511 (ESESAASSRA…KFEEHENTND (147 aa)) is disordered. Residues Ser-366, Ser-368, and Ser-376 each carry the phosphoserine modification. The segment covering 397–408 (SSRNQNGVSSNG) has biased composition (polar residues). 2 stretches are compositionally biased toward basic and acidic residues: residues 413–422 (LNKEEVKVEG) and 461–474 (ARNENDFDEKNERP). Lys-419 participates in a covalent cross-link: Glycyl lysine isopeptide (Lys-Gly) (interchain with G-Cter in SUMO2). Residues 481–493 (NSSGKESPGSSEF) are compositionally biased toward polar residues. A phosphoserine mark is found at Ser-482, Ser-487, and Ser-490. The segment covering 499 to 511 (SHGKFEEHENTND) has biased composition (basic and acidic residues).

Interacts with HDAC1. Part of a complex containing at least CDYL, MIER1, MIER2, HDAC1 and HDAC2. In terms of tissue distribution, ubiquitously expressed. Isoform 1 is only expressed in testis.

The protein localises to the nucleus. In terms of biological role, transcriptional repressor regulating the expression of a number of genes including SP1 target genes. Probably functions through recruitment of HDAC1 a histone deacetylase involved in chromatin silencing. The sequence is that of Mesoderm induction early response protein 1 (Mier1) from Mus musculus (Mouse).